Reading from the N-terminus, the 20-residue chain is 21 kDa cold shock-induced protein (20 aa).

A compositionally biased stretch (basic and acidic residues) spans 1–12; that stretch reads TDSIKETIKETV. Positions 1-20 are disordered; it reads TDSIKETIKETVNHQAEWPY.

In Streptococcus thermophilus, this protein is 21 kDa cold shock-induced protein.